A 235-amino-acid chain; its full sequence is MSNQLIYTGKAKDIYSTEDENVIKSVYKDQATMLNGARKETIKGKGVLNNQISSLIFEKLNAAGVATHFIERISDTEQLNKKVTIIPLEVVLRNVTAGSFSKRFGVEEGLDLKTPIVEFYYKNDDLDDPFINDEHVKFLDIANDEQIAYIKEETRRINELLKDWFEQIGLRLIDFKLEFGFDKDGKIILADEFSPDNCRLWDAEGHHMDKDVFRRDLGSLTDVYEVVLEKLQGLK.

The protein belongs to the SAICAR synthetase family.

The enzyme catalyses 5-amino-1-(5-phospho-D-ribosyl)imidazole-4-carboxylate + L-aspartate + ATP = (2S)-2-[5-amino-1-(5-phospho-beta-D-ribosyl)imidazole-4-carboxamido]succinate + ADP + phosphate + 2 H(+). It participates in purine metabolism; IMP biosynthesis via de novo pathway; 5-amino-1-(5-phospho-D-ribosyl)imidazole-4-carboxamide from 5-amino-1-(5-phospho-D-ribosyl)imidazole-4-carboxylate: step 1/2. The protein is Phosphoribosylaminoimidazole-succinocarboxamide synthase of Streptococcus thermophilus (strain CNRZ 1066).